Reading from the N-terminus, the 339-residue chain is Basic membrane protein A (339 aa).

Residues 1–17 form the signal peptide; the sequence is MNKILLLILLESIVFLS. A lipid anchor (N-palmitoyl cysteine) is attached at Cys18. Cys18 is lipidated: S-diacylglycerol cysteine.

This sequence belongs to the BMP lipoprotein family. Monomer.

The protein localises to the cell inner membrane. In terms of biological role, immunogenic protein. May be part of an ABC-type nucleoside uptake system involved in the purine salvage pathway. This Borreliella burgdorferi (strain ATCC 35210 / DSM 4680 / CIP 102532 / B31) (Borrelia burgdorferi) protein is Basic membrane protein A (bmpA).